Consider the following 270-residue polypeptide: uncharacterized protein (270 aa).

6 residues coordinate a divalent metal cation: aspartate 53, histidine 55, aspartate 83, asparagine 116, histidine 207, and histidine 209.

It belongs to the metallophosphoesterase superfamily. A divalent metal cation is required as a cofactor.

This is an uncharacterized protein from Bacillus subtilis (strain 168).